A 121-amino-acid polypeptide reads, in one-letter code: Large ribosomal subunit protein uL18 (121 aa).

The protein belongs to the universal ribosomal protein uL18 family. In terms of assembly, part of the 50S ribosomal subunit; part of the 5S rRNA/L5/L18/L25 subcomplex. Contacts the 5S and 23S rRNAs.

Functionally, this is one of the proteins that bind and probably mediate the attachment of the 5S RNA into the large ribosomal subunit, where it forms part of the central protuberance. The sequence is that of Large ribosomal subunit protein uL18 from Polaromonas sp. (strain JS666 / ATCC BAA-500).